A 295-amino-acid chain; its full sequence is Ribosomal protein L11 methyltransferase (295 aa).

Positions 145, 166, 188, and 230 each coordinate S-adenosyl-L-methionine.

It belongs to the methyltransferase superfamily. PrmA family.

The protein resides in the cytoplasm. The enzyme catalyses L-lysyl-[protein] + 3 S-adenosyl-L-methionine = N(6),N(6),N(6)-trimethyl-L-lysyl-[protein] + 3 S-adenosyl-L-homocysteine + 3 H(+). Methylates ribosomal protein L11. The protein is Ribosomal protein L11 methyltransferase of Haemophilus influenzae (strain PittEE).